A 200-amino-acid polypeptide reads, in one-letter code: Snake venom metalloproteinase hemorrhagic factor 2 (200 aa).

In terms of domain architecture, Peptidase M12B spans 4–200; sequence KYIELVVVAD…RKPQCILNKP (197 aa). E7 lines the Ca(2+) pocket. Residue N70 is glycosylated (N-linked (GlcNAc...) asparagine). D91 contributes to the Ca(2+) binding site. Disulfide bonds link C115/C195, C155/C179, and C157/C162. H140 lines the Zn(2+) pocket. E141 is an active-site residue. H144 and H150 together coordinate Zn(2+). The Ca(2+) site is built by C195 and N198.

This sequence belongs to the venom metalloproteinase (M12B) family. P-I subfamily. Monomer. The cofactor is Zn(2+). As to expression, expressed by the venom gland.

The protein localises to the secreted. In terms of biological role, snake venom zinc metalloproteinase that induces weak hemorrhage and mild myonecrosis. Shows mild myotoxicity by killing myocytes. Also induces edema in the mouse footpad at doses where hemorrhage is absent. In vitro, degrades laminin, fibronectin, and type IV collagen, suggesting this toxin play a role in local tissue damage by degrading extracellular matrix, and possibly by degrading muscle extracellular matrix. Hemorrhage is not due to cytotoxicity towards endothelial cells in culture, and may only play a minor role in local bleeding characteristic of L.muta envenomations. Also induces the synthesis of several endogenous matrix metalloproteinases, which in turn, may participate in extracellular matrix degradation. In Lachesis muta muta (Bushmaster), this protein is Snake venom metalloproteinase hemorrhagic factor 2.